We begin with the raw amino-acid sequence, 320 residues long: Acetyl-coenzyme A carboxylase carboxyl transferase subunit beta (320 aa).

A CoA carboxyltransferase N-terminal domain is found at 25-294 (LWRKCPECGT…AIVGDLPAPD (270 aa)). Cys29, Cys32, Cys48, and Cys51 together coordinate Zn(2+). The C4-type zinc finger occupies 29 to 51 (CPECGTMLFHRELSDNLFVCISC). The tract at residues 290-320 (LPAPDPAPATPEPQKAAPSAPAQDKPGAGRS) is disordered.

The protein belongs to the AccD/PCCB family. Acetyl-CoA carboxylase is a heterohexamer composed of biotin carboxyl carrier protein (AccB), biotin carboxylase (AccC) and two subunits each of ACCase subunit alpha (AccA) and ACCase subunit beta (AccD). Requires Zn(2+) as cofactor.

The protein localises to the cytoplasm. The catalysed reaction is N(6)-carboxybiotinyl-L-lysyl-[protein] + acetyl-CoA = N(6)-biotinyl-L-lysyl-[protein] + malonyl-CoA. It functions in the pathway lipid metabolism; malonyl-CoA biosynthesis; malonyl-CoA from acetyl-CoA: step 1/1. Functionally, component of the acetyl coenzyme A carboxylase (ACC) complex. Biotin carboxylase (BC) catalyzes the carboxylation of biotin on its carrier protein (BCCP) and then the CO(2) group is transferred by the transcarboxylase to acetyl-CoA to form malonyl-CoA. This Dinoroseobacter shibae (strain DSM 16493 / NCIMB 14021 / DFL 12) protein is Acetyl-coenzyme A carboxylase carboxyl transferase subunit beta.